A 449-amino-acid polypeptide reads, in one-letter code: Phosphoglucosamine mutase (449 aa).

Residue serine 101 is the Phosphoserine intermediate of the active site. Residues serine 101, aspartate 242, aspartate 244, and aspartate 246 each coordinate Mg(2+). Serine 101 carries the post-translational modification Phosphoserine.

This sequence belongs to the phosphohexose mutase family. Mg(2+) serves as cofactor. Activated by phosphorylation.

It catalyses the reaction alpha-D-glucosamine 1-phosphate = D-glucosamine 6-phosphate. In terms of biological role, catalyzes the conversion of glucosamine-6-phosphate to glucosamine-1-phosphate. The chain is Phosphoglucosamine mutase from Bradyrhizobium sp. (strain BTAi1 / ATCC BAA-1182).